The following is a 428-amino-acid chain: MYKEPFQPTYEYALECDKHDELKDFQTEFYKKEGTIYLDGNSLGLLSKRAEKSLLTLLDSWKEYGIDGWTEGEHPWFFLSEKLGKLTAPLIGALPEETIVTGSTTTNIHQVIATFYEPKGIRTKILADELTFPSDIYALQSQIRLKGLDPEEHLVRVKSRDGRTLSEEDIIHAMEDDIALILLPSVLYRSGQILDMKRLTTEAHKRGIHIGFDLCHSIGSIPHHFKDWDVDFAVWCNYKYLNAGPGSVAGLYVNSKHFNRLPGLSGWFSSRKDKQFDMEHTLTAADHAGAYQIGTPHVLSTAPLIGSLEIFKDAGIERLREKSLHITRYMLNLIGHELKDFEFTIGNPLEDEKRGGHIYLEHAEAARICKALKANGVIPDFRAPNGVRLAPVALYNTYEEVWKSVQILKKIMKNEEYKQFENKREVVA.

Pyridoxal 5'-phosphate contacts are provided by residues T104, T105, F132 to D135, D213, H216, and Y238. K239 carries the N6-(pyridoxal phosphate)lysine modification. The pyridoxal 5'-phosphate site is built by W267 and T295.

The protein belongs to the kynureninase family. As to quaternary structure, homodimer. Requires pyridoxal 5'-phosphate as cofactor.

The enzyme catalyses L-kynurenine + H2O = anthranilate + L-alanine + H(+). It carries out the reaction 3-hydroxy-L-kynurenine + H2O = 3-hydroxyanthranilate + L-alanine + H(+). Its pathway is amino-acid degradation; L-kynurenine degradation; L-alanine and anthranilate from L-kynurenine: step 1/1. It functions in the pathway cofactor biosynthesis; NAD(+) biosynthesis; quinolinate from L-kynurenine: step 2/3. Its function is as follows. Catalyzes the cleavage of L-kynurenine (L-Kyn) and L-3-hydroxykynurenine (L-3OHKyn) into anthranilic acid (AA) and 3-hydroxyanthranilic acid (3-OHAA), respectively. The sequence is that of Kynureninase from Bacillus cereus (strain ATCC 14579 / DSM 31 / CCUG 7414 / JCM 2152 / NBRC 15305 / NCIMB 9373 / NCTC 2599 / NRRL B-3711).